The chain runs to 125 residues: UPF0102 protein CCNA_00142 (125 aa).

This sequence belongs to the UPF0102 family.

This is UPF0102 protein CCNA_00142 from Caulobacter vibrioides (strain NA1000 / CB15N) (Caulobacter crescentus).